Reading from the N-terminus, the 265-residue chain is 3-methyl-2-oxobutanoate hydroxymethyltransferase (265 aa).

Positions 45 and 84 each coordinate Mg(2+). 3-methyl-2-oxobutanoate is bound by residues 45–46 (DS), D84, and K112. Position 114 (E114) interacts with Mg(2+). The active-site Proton acceptor is E182.

It belongs to the PanB family. In terms of assembly, homodecamer; pentamer of dimers. Mg(2+) is required as a cofactor.

The protein resides in the cytoplasm. It catalyses the reaction 3-methyl-2-oxobutanoate + (6R)-5,10-methylene-5,6,7,8-tetrahydrofolate + H2O = 2-dehydropantoate + (6S)-5,6,7,8-tetrahydrofolate. It functions in the pathway cofactor biosynthesis; (R)-pantothenate biosynthesis; (R)-pantoate from 3-methyl-2-oxobutanoate: step 1/2. In terms of biological role, catalyzes the reversible reaction in which hydroxymethyl group from 5,10-methylenetetrahydrofolate is transferred onto alpha-ketoisovalerate to form ketopantoate. The polypeptide is 3-methyl-2-oxobutanoate hydroxymethyltransferase (Baumannia cicadellinicola subsp. Homalodisca coagulata).